A 360-amino-acid chain; its full sequence is Phospho-N-acetylmuramoyl-pentapeptide-transferase (360 aa).

Helical transmembrane passes span Val-27–Phe-47, Thr-71–Ala-91, Val-98–Leu-118, Leu-142–Met-162, Tyr-168–Ser-188, Gly-199–Thr-219, Ala-236–Phe-256, Val-263–Leu-283, Ile-288–Val-308, and Val-338–Lys-358.

The protein belongs to the glycosyltransferase 4 family. MraY subfamily. The cofactor is Mg(2+).

It is found in the cell inner membrane. It carries out the reaction UDP-N-acetyl-alpha-D-muramoyl-L-alanyl-gamma-D-glutamyl-meso-2,6-diaminopimeloyl-D-alanyl-D-alanine + di-trans,octa-cis-undecaprenyl phosphate = di-trans,octa-cis-undecaprenyl diphospho-N-acetyl-alpha-D-muramoyl-L-alanyl-D-glutamyl-meso-2,6-diaminopimeloyl-D-alanyl-D-alanine + UMP. Its pathway is cell wall biogenesis; peptidoglycan biosynthesis. Its function is as follows. Catalyzes the initial step of the lipid cycle reactions in the biosynthesis of the cell wall peptidoglycan: transfers peptidoglycan precursor phospho-MurNAc-pentapeptide from UDP-MurNAc-pentapeptide onto the lipid carrier undecaprenyl phosphate, yielding undecaprenyl-pyrophosphoryl-MurNAc-pentapeptide, known as lipid I. The sequence is that of Phospho-N-acetylmuramoyl-pentapeptide-transferase from Psychromonas ingrahamii (strain DSM 17664 / CCUG 51855 / 37).